A 510-amino-acid chain; its full sequence is Global transcription regulator sge1 (510 aa).

Disordered regions lie at residues P94–N152, H393–S438, and L469–L510. The span at N123–S143 shows a compositional bias: low complexity. 2 stretches are compositionally biased toward polar residues: residues G471–F480 and P501–L510.

It belongs to the MIT1/WOR1 family.

It is found in the nucleus. In terms of biological role, global transcriptional regulator of pathogenicity. Differentially regulates expression of effector genes. Also required for radial growth and production of asexual conidiospores, and plays a role in mycelium pigmentation. Not required for induction of Ave1, the effector that activates resistance mediated by the Ve1 immune receptor in tomato. This chain is Global transcription regulator sge1, found in Verticillium dahliae (strain VdLs.17 / ATCC MYA-4575 / FGSC 10137) (Verticillium wilt).